Consider the following 217-residue polypeptide: Adenylate kinase (217 aa).

ATP is bound at residue 11-16; it reads GAGKGT. An NMP region spans residues 31–60; sequence STGDMFREAMANETPVGLEAKSYIDKGDLV. AMP contacts are provided by residues Thr-32, Arg-37, 58-60, 86-89, and Gln-93; these read DLV and GFPR. The interval 127–165 is LID; that stretch reads ARYICKNCGATYNKISNPTKVEGTCDRCGGHEFFQREDD. Arg-128 provides a ligand contact to ATP. Cys-131 and Cys-134 together coordinate Zn(2+). ATP is bound at residue 137–138; sequence TY. Zn(2+)-binding residues include Cys-151 and Cys-154. Positions 162 and 173 each coordinate AMP. Residue Gln-201 participates in ATP binding.

The protein belongs to the adenylate kinase family. As to quaternary structure, monomer.

It localises to the cytoplasm. It carries out the reaction AMP + ATP = 2 ADP. The protein operates within purine metabolism; AMP biosynthesis via salvage pathway; AMP from ADP: step 1/1. Functionally, catalyzes the reversible transfer of the terminal phosphate group between ATP and AMP. Plays an important role in cellular energy homeostasis and in adenine nucleotide metabolism. This Lactobacillus gasseri (strain ATCC 33323 / DSM 20243 / BCRC 14619 / CIP 102991 / JCM 1131 / KCTC 3163 / NCIMB 11718 / NCTC 13722 / AM63) protein is Adenylate kinase.